Reading from the N-terminus, the 162-residue chain is Austinoid biosynthesis clusters protein J (162 aa).

The protein belongs to the trt14 isomerase family. Homodimer.

Its pathway is secondary metabolite biosynthesis; terpenoid biosynthesis. Part of the gene cluster B that mediates the biosynthesis of austinol and dehydroaustinol, two fungal meroterpenoids. The first step of the pathway is the synthesis of 3,5-dimethylorsellinic acid by the polyketide synthase ausA. 3,5-dimethylorsellinic acid is then prenylated by the polyprenyl transferase ausN. Further epoxidation by the FAD-dependent monooxygenase ausM and cyclization by the probable terpene cyclase ausL lead to the formation of protoaustinoid A. Protoaustinoid A is then oxidized to spiro-lactone preaustinoid A3 by the combined action of the FAD-binding monooxygenases ausB and ausC, and the dioxygenase ausE. Acid-catalyzed keto-rearrangement and ring contraction of the tetraketide portion of preaustinoid A3 by ausJ lead to the formation of preaustinoid A4. The aldo-keto reductase ausK, with the help of ausH, is involved in the next step by transforming preaustinoid A4 into isoaustinone which is in turn hydroxylated by the P450 monooxygenase ausI to form austinolide. Finally, the cytochrome P450 monooxygenase ausG modifies austinolide to austinol. Austinol can be further modified to dehydroaustinol which forms a diffusible complex with diorcinol that initiates conidiation. Due to genetic rearrangements of the clusters and the subsequent loss of some enzymes, the end products of the Emericella nidulans austinoid biosynthesis clusters are austinol and dehydroaustinol, even if additional enzymes, such as the O-acetyltransferase ausQ and the cytochrome P450 monooxygenase ausR are still functional. The sequence is that of Austinoid biosynthesis clusters protein J from Emericella nidulans (strain FGSC A4 / ATCC 38163 / CBS 112.46 / NRRL 194 / M139) (Aspergillus nidulans).